A 426-amino-acid chain; its full sequence is Tol-Pal system protein TolB (426 aa).

The signal sequence occupies residues 1–24 (MKLKSRYTSLISVVSIFFSSMVMA).

The protein belongs to the TolB family. The Tol-Pal system is composed of five core proteins: the inner membrane proteins TolA, TolQ and TolR, the periplasmic protein TolB and the outer membrane protein Pal. They form a network linking the inner and outer membranes and the peptidoglycan layer.

It localises to the periplasm. Its function is as follows. Part of the Tol-Pal system, which plays a role in outer membrane invagination during cell division and is important for maintaining outer membrane integrity. The sequence is that of Tol-Pal system protein TolB from Haemophilus ducreyi (strain 35000HP / ATCC 700724).